The sequence spans 213 residues: MRAAFQSSEGFSMIKNDKAWIGDLLGGPLMSRESRVIAELLLTDPDEQTWQEQIVGHNILQASSPNTAKRYAATIRLRLNTLDKSAWTLIAEGSERERQQLLFVALMLHSPVVKDFLAEVVNDLRRQFKEKLPGNSWNEFVNSQVRLHPVLASYSDSSIAKMGNNLVKALAEAGYVDTPRRRNLQAVYLLPETQAVLQRLGQQDLISILEGKR.

Belongs to the BrxA family.

BREX systems (bacteriophage exclusion) provide immunity against bacteriophage. A probably non-essential part of a type 1 BREX system which protects against dsDNA phage. This system allows phage adsorption but prevents phage DNA replication, without degradation of the phage DNA. Methylation of bacterial DNA by PglX guides self/non-self discrimination. When the brxA-brxB-brxC-pglX-pglZ-brxL genes are transformed into a susceptible E.coli strain (BW25113) they confer very high resistance to infection by bacteriophage VR7 and VpaE1, about 100-fold protection against lambda, T5 and T7 and no protection against RNA phage Qbeta, ssDNA phage M13 or dSDNA phage T4 and VR5. Glycosylated phage DNA is not susceptible to BREX. The BREX system does not confer resistance to lysogenic lambda phage, i.e. prophage that are integrated into the chromosomal DNA and then induced to form phage. This Escherichia coli O9:H4 (strain HS) protein is BREX protein BrxA.